The primary structure comprises 192 residues: Xanthine phosphoribosyltransferase (192 aa).

2 residues coordinate xanthine: leucine 20 and asparagine 27. 128–132 (ANGQA) provides a ligand contact to 5-phospho-alpha-D-ribose 1-diphosphate. Position 156 (lysine 156) interacts with xanthine.

Belongs to the purine/pyrimidine phosphoribosyltransferase family. Xpt subfamily. Homodimer.

It is found in the cytoplasm. The enzyme catalyses XMP + diphosphate = xanthine + 5-phospho-alpha-D-ribose 1-diphosphate. The protein operates within purine metabolism; XMP biosynthesis via salvage pathway; XMP from xanthine: step 1/1. Converts the preformed base xanthine, a product of nucleic acid breakdown, to xanthosine 5'-monophosphate (XMP), so it can be reused for RNA or DNA synthesis. The chain is Xanthine phosphoribosyltransferase from Ligilactobacillus salivarius (strain UCC118) (Lactobacillus salivarius).